The sequence spans 440 residues: Thymidine phosphorylase (440 aa).

Belongs to the thymidine/pyrimidine-nucleoside phosphorylase family. In terms of assembly, homodimer.

It catalyses the reaction thymidine + phosphate = 2-deoxy-alpha-D-ribose 1-phosphate + thymine. It functions in the pathway pyrimidine metabolism; dTMP biosynthesis via salvage pathway; dTMP from thymine: step 1/2. The enzymes which catalyze the reversible phosphorolysis of pyrimidine nucleosides are involved in the degradation of these compounds and in their utilization as carbon and energy sources, or in the rescue of pyrimidine bases for nucleotide synthesis. This is Thymidine phosphorylase from Burkholderia pseudomallei (strain K96243).